The sequence spans 480 residues: MITPLWFHVTQQPDGTYFNFIEIAVRLNGTLVNGISQTLLVPAKLWEHTGLGKIYVVGSMENKLDVDFCAVRYSDILGGFCMEVSNPHDEPLTFNHEVQRFILFSPQIYPISYQFQVLRPPSVSFPKCKANVSSDIIVHSLSDTYVFIKIQFNGITWEDPKKFDLPTGPLSGPFWMSYPVAVLNLPRKLYALHHYLLSRHTDTCDSENCYYTNYIVSRSCFHKRTLYLILTGIGTSKNACYAKDLLFCGIFSTSHVPEGDDIPQLDPAYNVHGESLLRDTLPIINPSAHCNTFQTFTHDTVALFAPDEWHSSLLNVAVWRPGKILTLPGTFVQNLPTDHKPIIPVGDAVFLVTQQLYAGHPNHIPARKIRALVSKTYLILFPLNLTFRLDELNPICFSEKPQSKLTLPQIDKHPSFDQDFLKNFSIDEMQLISQFFDSLRKMYTSNYVRTLTKRFHGNWNRWPSCRNHQFNQLLCAFYSF.

This Elephas maximus (Indian elephant) protein is Protein U54.